The chain runs to 67 residues: Preprofallaxidin-4 (67 aa).

An N-terminal signal peptide occupies residues 1 to 22 (MASLKKFLFLVLFLGMVSLSIC). The propeptide occupies 23 to 46 (DKEKREGENEEEEEEHEEESEEKR). The tract at residues 24-48 (KEKREGENEEEEEEHEEESEEKRGL) is disordered. Positions 30–42 (ENEEEEEEHEEES) are enriched in acidic residues.

This sequence belongs to the frog skin active peptide (FSAP) family. Dermaseptin subfamily. Expressed by the skin glands.

Its subcellular location is the secreted. This Litoria fallax (Eastern dwarf tree frog) protein is Preprofallaxidin-4.